We begin with the raw amino-acid sequence, 493 residues long: Poly(ribitol-phosphate) alpha-N-acetylglucosaminyltransferase (493 aa).

Residues Gly-17, Lys-59, His-249, Arg-326, Lys-331, Thr-383, and 403–411 contribute to the UDP-N-acetyl-alpha-D-glucosamine site; that span reads EGQGLSMIE.

It belongs to the glycosyltransferase group 1 family. As to quaternary structure, homotrimer.

Its subcellular location is the cytoplasm. It catalyses the reaction 4-O-[(D-ribitylphospho)(n)-di{(2R)-glycerylphospho}]-N-acetyl-beta-D-mannosaminyl-(1-&gt;4)-N-acetyl-alpha-D-glucosaminyl di-trans,octa-cis-undecaprenyl diphosphate + n UDP-N-acetyl-alpha-D-glucosamine = 4-O-([2-N-acetyl-alpha-D-glucosaminyl-1-D-ribitylphospho](n)-di{[2R]-1-glycerylphospho})-N-acetyl-beta-D-mannosaminyl-(1-&gt;4)-N-acetyl-alpha-D-glucosaminyl di-trans,octa-cis-undecaprenyl diphosphate + n UDP + n H(+). The protein operates within cell wall biogenesis; poly(ribitol phosphate) teichoic acid biosynthesis. Functionally, attaches N-acetyl-alpha-D-glucosamine residues to poly(RboP)-wall teichoic acids (WTAs). The sequence is that of Poly(ribitol-phosphate) alpha-N-acetylglucosaminyltransferase from Staphylococcus aureus (strain COL).